A 410-amino-acid chain; its full sequence is Voltage-dependent chloride channel 2, chloroplastic (410 aa).

The Lumenal, thylakoid portion of the chain corresponds to 1–110 (MYQSMNLSFS…RHVSSSPSSR (110 aa)). A helical transmembrane segment spans residues 111–131 (VILSLIPPVFFFTTVAILIAG). Topologically, residues 132–147 (YNSAVDLDWLPDFFPV) are stromal. Residues 148–168 (LRASPLPYQLTAPALALLLVF) form a helical membrane-spanning segment. Residues 169 to 315 (RTEASYSRFE…PLSYTRLTSR (147 aa)) are Lumenal, thylakoid-facing. 2 consecutive transmembrane segments (helical) span residues 316 to 336 (FLVL…HWNV) and 337 to 357 (VPAT…GVLI). Residues 358 to 410 (EEPFSMLALDELCAMVLSNSDEAVESKEVIRNRIIAKKRILEIKHSSNGWHKS) are Lumenal, thylakoid-facing.

This sequence belongs to the anion channel-forming bestrophin (TC 1.A.46) family. Voltage-dependent chloride channel subfamily. Mostly expressed in flowers and, to a lower extent, in leaves, stems and roots.

The protein resides in the plastid. It localises to the chloroplast thylakoid membrane. The catalysed reaction is chloride(in) = chloride(out). Voltage-dependent chloride (Cl) channel probably contributing to proton motive force (PMF) partitioning across the thylakoid membrane by anion influx into the lumen. Influences thylakoid ultrastructure, including lumen size and organization. This Arabidopsis thaliana (Mouse-ear cress) protein is Voltage-dependent chloride channel 2, chloroplastic.